Here is an 867-residue protein sequence, read N- to C-terminus: G-protein coupled receptor family C group 6 member A (867 aa).

An N-terminal signal peptide occupies residues 1–19 (MDLMSFILLWAGLMKVAEA). The Extracellular portion of the chain corresponds to 20–566 (SIAQFSQLGA…EYFDWNSGFA (547 aa)). 10 N-linked (GlcNAc...) asparagine glycosylation sites follow: Asn51, Asn55, Asn97, Asn296, Asn308, Asn336, Asn356, Asn370, Asn527, and Asn547. A helical transmembrane segment spans residues 567–587 (IVLLILAALGVLLLFFMSALF). At 588 to 602 (FWQRHSPVVKAAGGP) the chain is on the cytoplasmic side. The chain crosses the membrane as a helical span at residues 603–623 (LCHLILVSLLGSFISVVFFVG). Residues 624–634 (EPSDLTCRARQ) lie on the Extracellular side of the membrane. A helical membrane pass occupies residues 635–655 (VIFGFSFTLCVSCILVKSLKI). Residues 656–675 (LLAFEMNFELKELLCMLYKP) lie on the Cytoplasmic side of the membrane. The helical transmembrane segment at 676 to 696 (YMIVSVGMGVQIIICTVWLTL) threads the bilayer. Topologically, residues 697 to 716 (YKPFKDKEVQTESILLECNE) are extracellular. The helical transmembrane segment at 717–737 (GFYVMFWLMLGYIALLALFCF) threads the bilayer. Over 738-754 (TFAYIGRKLPQKYNEAK) the chain is Cytoplasmic. The chain crosses the membrane as a helical span at residues 755–775 (FITFSMVICLMAWIIFIPIHV). Topologically, residues 776-781 (TTSGKY) are extracellular. Residues 782 to 802 (VPAVEMVVILISNYGILSCHF) traverse the membrane as a helical segment. The Cytoplasmic portion of the chain corresponds to 803–867 (LPKSYIILFK…LSFVPEEKHE (65 aa)).

It belongs to the G-protein coupled receptor 3 family. In terms of assembly, homodimer; disulfide-linked.

It localises to the cell membrane. Olfactory receptor that is activated by amino acids that act as potent odorants in fish. Displays preference for acidic amino acids such as Glu over basic amino acids. This is G-protein coupled receptor family C group 6 member A (gprc6a) from Danio rerio (Zebrafish).